The primary structure comprises 452 residues: Tubulin alpha-1 chain (452 aa).

GTP is bound at residue glutamine 11. Position 40 is an N6-acetyllysine (lysine 40). Glutamate 71, serine 140, glycine 144, threonine 145, threonine 179, asparagine 206, and asparagine 228 together coordinate GTP. Glutamate 71 serves as a coordination point for Mg(2+). Residue glutamate 254 is part of the active site. A disordered region spans residues 433–452; the sequence is EEVGVDSADAEGEEEEGDEY.

It belongs to the tubulin family. Dimer of alpha and beta chains. A typical microtubule is a hollow water-filled tube with an outer diameter of 25 nm and an inner diameter of 15 nM. Alpha-beta heterodimers associate head-to-tail to form protofilaments running lengthwise along the microtubule wall with the beta-tubulin subunit facing the microtubule plus end conferring a structural polarity. Microtubules usually have 13 protofilaments but different protofilament numbers can be found in some organisms and specialized cells. It depends on Mg(2+) as a cofactor. In terms of processing, undergoes a tyrosination/detyrosination cycle, the cyclic removal and re-addition of a C-terminal tyrosine residue by the enzymes tubulin tyrosine carboxypeptidase (TTCP) and tubulin tyrosine ligase (TTL), respectively. Acetylation of alpha chains at Lys-40 stabilizes microtubules and affects affinity and processivity of microtubule motors. This modification has a role in multiple cellular functions, ranging from cell motility, cell cycle progression or cell differentiation to intracellular trafficking and signaling.

Its subcellular location is the cytoplasm. It localises to the cytoskeleton. It catalyses the reaction GTP + H2O = GDP + phosphate + H(+). Tubulin is the major constituent of microtubules, a cylinder consisting of laterally associated linear protofilaments composed of alpha- and beta-tubulin heterodimers. Microtubules grow by the addition of GTP-tubulin dimers to the microtubule end, where a stabilizing cap forms. Below the cap, tubulin dimers are in GDP-bound state, owing to GTPase activity of alpha-tubulin. The protein is Tubulin alpha-1 chain of Paracentrotus lividus (Common sea urchin).